Reading from the N-terminus, the 109-residue chain is Spermidine export protein MdtI (109 aa).

A run of 4 helical transmembrane segments spans residues 6–26 (LQHI…NIWL), 36–56 (VYGV…GQAV), 64–84 (AYAL…WIMF), and 88–108 (LNRK…IIKL).

Belongs to the drug/metabolite transporter (DMT) superfamily. Small multidrug resistance (SMR) (TC 2.A.7.1) family. MdtI subfamily. In terms of assembly, forms a complex with MdtJ.

The protein resides in the cell inner membrane. Catalyzes the excretion of spermidine. This Cronobacter sakazakii (strain ATCC BAA-894) (Enterobacter sakazakii) protein is Spermidine export protein MdtI (mdtI).